A 143-amino-acid chain; its full sequence is Large ribosomal subunit protein uL15 (143 aa).

Basic residues-rich tracts occupy residues 1–13 and 23–38; these read MIRK…KQRG and KKHR…GNAG. Positions 1 to 38 are disordered; sequence MIRKSKKITKQRGSRTCGYGEAKKHRGAGHRGGRGNAG.

Belongs to the universal ribosomal protein uL15 family. In terms of assembly, part of the 50S ribosomal subunit.

In terms of biological role, binds to the 23S rRNA. The sequence is that of Large ribosomal subunit protein uL15 from Methanococcus vannielii.